We begin with the raw amino-acid sequence, 308 residues long: UPF0282 protein STK_23220 (308 aa).

It belongs to the UPF0282 family.

This is UPF0282 protein STK_23220 from Sulfurisphaera tokodaii (strain DSM 16993 / JCM 10545 / NBRC 100140 / 7) (Sulfolobus tokodaii).